The chain runs to 403 residues: Soluble calcium-activated nucleotidase 1 (403 aa).

Topologically, residues 1-44 are cytoplasmic; sequence MPIQPFDQREWNEPMHSLRISVGGLPVLASMTKATDPRFRPRWR. A helical; Signal-anchor for type II membrane protein transmembrane segment spans residues 45-61; sequence VILTSFVGAALLWLLYS. The Lumenal portion of the chain corresponds to 62–403; it reads HHQGPVPGRP…TVKYEGIEFI (342 aa). Asn90 carries an N-linked (GlcNAc...) asparagine glycan. Ca(2+) contacts are provided by Ser170, Asp171, Glu217, Glu286, Ser347, and Glu398.

Belongs to the apyrase family. In terms of assembly, monomer. Homodimer; dimerization is Ca(2+)-dependent. It depends on Ca(2+) as a cofactor.

It is found in the endoplasmic reticulum membrane. The protein localises to the golgi apparatus. The protein resides in the golgi stack membrane. It catalyses the reaction a ribonucleoside 5'-diphosphate + H2O = a ribonucleoside 5'-phosphate + phosphate + H(+). Calcium-dependent nucleotidase with a preference for UDP. The order of activity with different substrates is UDP &gt; GDP &gt; IDP &gt;&gt; UTP &gt; CDP = GTP = ITP. Has very low activity towards ADP and even lower activity towards ATP. Does not hydrolyze AMP and GMP. Involved in proteoglycan synthesis. The protein is Soluble calcium-activated nucleotidase 1 (Cant1) of Mus musculus (Mouse).